Consider the following 1107-residue polypeptide: Lon protease homolog, mitochondrial (1107 aa).

A mitochondrion-targeting transit peptide spans 1–31 (MLSRQRIPRILASRTSLAHSIRSFTSTTSSI). Disordered stretches follow at residues 32–152 (RPVA…PGDK) and 273–329 (PEAA…PYEP). The segment covering 51–60 (TNLSSFSTYT) has biased composition (polar residues). The segment covering 80–101 (EEERKANVEHAEAEAKEAESKQ) has biased composition (basic and acidic residues). The segment covering 122-141 (GAAGGSSAGSGSGADGGSGD) has biased composition (gly residues). The segment covering 142–152 (GGKRGRKPGDK) has biased composition (basic and acidic residues). The Lon N-terminal domain maps to 166-441 (VMAIPIAKRP…KALLVLKKEH (276 aa)). 594-601 (GPPGVGKT) contacts ATP. The interval 808–858 (PESEALTEEGKAAQEETEKKKSEEAASGETSSPKAATEASEKETTEKPRVA) is disordered. The span at 815-831 (EEGKAAQEETEKKKSEE) shows a compositional bias: basic and acidic residues. Low complexity predominate over residues 832 to 845 (AASGETSSPKAATE). The segment covering 846-856 (ASEKETTEKPR) has biased composition (basic and acidic residues). One can recognise a Lon proteolytic domain in the interval 891 to 1077 (VTPPGVTMGL…SEVFDLIFPK (187 aa)). Residues serine 983 and lysine 1026 contribute to the active site. Positions 1085 to 1107 (KSRIIEDDKSEKEESKKKNDDDE) are disordered.

It belongs to the peptidase S16 family. Homohexamer or homoheptamer. Organized in a ring with a central cavity.

Its subcellular location is the mitochondrion matrix. The catalysed reaction is Hydrolysis of proteins in presence of ATP.. Its function is as follows. ATP-dependent serine protease that mediates the selective degradation of misfolded, unassembled or oxidatively damaged polypeptides as well as certain short-lived regulatory proteins in the mitochondrial matrix. May also have a chaperone function in the assembly of inner membrane protein complexes. Participates in the regulation of mitochondrial gene expression and in the maintenance of the integrity of the mitochondrial genome. Binds to mitochondrial DNA in a site-specific manner. This Neurospora crassa (strain ATCC 24698 / 74-OR23-1A / CBS 708.71 / DSM 1257 / FGSC 987) protein is Lon protease homolog, mitochondrial (pim1).